Reading from the N-terminus, the 469-residue chain is Glutamate--tRNA ligase (469 aa).

Positions Pro9–Gly19 match the 'HIGH' region motif. Residues Cys98, Cys100, Cys125, and Asp127 each contribute to the Zn(2+) site. A 'KMSKS' region motif is present at residues Lys236–Arg240. Position 239 (Lys239) interacts with ATP.

The protein belongs to the class-I aminoacyl-tRNA synthetase family. Glutamate--tRNA ligase type 1 subfamily. As to quaternary structure, monomer. The cofactor is Zn(2+).

The protein localises to the cytoplasm. It catalyses the reaction tRNA(Glu) + L-glutamate + ATP = L-glutamyl-tRNA(Glu) + AMP + diphosphate. In terms of biological role, catalyzes the attachment of glutamate to tRNA(Glu) in a two-step reaction: glutamate is first activated by ATP to form Glu-AMP and then transferred to the acceptor end of tRNA(Glu). In Shewanella loihica (strain ATCC BAA-1088 / PV-4), this protein is Glutamate--tRNA ligase.